We begin with the raw amino-acid sequence, 413 residues long: Putative competence-damage inducible protein (413 aa).

This sequence belongs to the CinA family.

This chain is Putative competence-damage inducible protein, found in Alkaliphilus oremlandii (strain OhILAs) (Clostridium oremlandii (strain OhILAs)).